We begin with the raw amino-acid sequence, 509 residues long: Seipin-3 (509 aa).

A disordered region spans residues 33–73 (YDCLNSSPPANLRRRRLPMDTDSSSSSSTSSLESCEKRSTV). Positions 52-63 (DTDSSSSSSTSS) are enriched in low complexity. Transmembrane regions (helical) follow at residues 238 to 258 (LFCA…AFMI) and 455 to 475 (LFVW…LVFF).

Belongs to the seipin family. In terms of tissue distribution, expressed in seeds, seedlings, leaves, stems and roots. Not detected in flowers.

It localises to the endoplasmic reticulum membrane. Functionally, involved in lipid metabolism and lipid droplet (LD) morphology, number, and size. Supports the formation of small-sized LDs and modulates triacylglycerol accumulation. Induces probably a reorganization of the endoplasmic reticulum into LD-forming domains. In Arabidopsis thaliana (Mouse-ear cress), this protein is Seipin-3.